The primary structure comprises 510 residues: Rab proteins geranylgeranyltransferase component A 1 (510 aa).

The protein belongs to the Rab GDI family. As to quaternary structure, may interact with rab-5, rab-7 and rab-11. Does not interact with rab-3, rab-27 and rab-10. As to expression, expressed in several neurons including head neurons, motor neurons located in the ventral nerve cord, HSN and CAN neurons, and tail neurons, and in muscles such as body-wall, pharyngeal, intestinal and anal sphincter. Also expressed in seam cells, the hypodermis and the intestine.

Its subcellular location is the cytoplasm. In terms of biological role, substrate-binding subunit of the Rab geranylgeranyltransferase (GGTase) complex. Binds unprenylated Rab proteins and presents the substrate peptide to the catalytic component B and remains bound to it after the geranylgeranyl transfer reaction. The component A is thought to be regenerated by transferring its prenylated Rab back to the donor membrane. Plays a role in neurotransmitter release from presynaptic terminals at neuromuscular junctions. Positively regulates the function of rab-27 in synaptic transmission most likely through mediating rab-27 prenylation. This chain is Rab proteins geranylgeranyltransferase component A 1, found in Caenorhabditis elegans.